Reading from the N-terminus, the 482-residue chain is Catalase (482 aa).

Residues 1–23 (MSQNKTLTTASGPPVADNQNSRS) are compositionally biased toward polar residues. The segment at 1 to 28 (MSQNKTLTTASGPPVADNQNSRSAGPRG) is disordered. Catalysis depends on residues His-55 and Asn-128. Position 338 (Tyr-338) interacts with heme. Residues 370–395 (SMAFGSNGGAAPNYEPNSYADAPKQA) form a disordered region.

Belongs to the catalase family. Requires heme as cofactor.

It carries out the reaction 2 H2O2 = O2 + 2 H2O. Its function is as follows. Decomposes hydrogen peroxide into water and oxygen; serves to protect cells from the toxic effects of hydrogen peroxide. In Onchocerca volvulus endobacterium, this protein is Catalase (cat).